We begin with the raw amino-acid sequence, 663 residues long: UvrABC system protein B (663 aa).

A Helicase ATP-binding domain is found at 31 to 418; that stretch reads DNIEGGEKAQ…TDTVVEQIIR (388 aa). 44–51 serves as a coordination point for ATP; the sequence is GATGTGKT. The Beta-hairpin motif lies at 97 to 120; sequence YYDYYQPEAYVPSSDTYIEKDSSV. The Helicase C-terminal domain occupies 435-601; it reads QMDDLLGEIN…TIKKEIRDLI (167 aa). In terms of domain architecture, UVR spans 627 to 662; it reads QAEIKALQQQMQEAAELLDFELAAQIRDVILELKAI.

This sequence belongs to the UvrB family. Forms a heterotetramer with UvrA during the search for lesions. Interacts with UvrC in an incision complex.

The protein localises to the cytoplasm. Functionally, the UvrABC repair system catalyzes the recognition and processing of DNA lesions. A damage recognition complex composed of 2 UvrA and 2 UvrB subunits scans DNA for abnormalities. Upon binding of the UvrA(2)B(2) complex to a putative damaged site, the DNA wraps around one UvrB monomer. DNA wrap is dependent on ATP binding by UvrB and probably causes local melting of the DNA helix, facilitating insertion of UvrB beta-hairpin between the DNA strands. Then UvrB probes one DNA strand for the presence of a lesion. If a lesion is found the UvrA subunits dissociate and the UvrB-DNA preincision complex is formed. This complex is subsequently bound by UvrC and the second UvrB is released. If no lesion is found, the DNA wraps around the other UvrB subunit that will check the other stand for damage. This is UvrABC system protein B from Streptococcus agalactiae serotype III (strain NEM316).